A 220-amino-acid chain; its full sequence is Probable nicotinate-nucleotide adenylyltransferase (220 aa).

The protein belongs to the NadD family.

The catalysed reaction is nicotinate beta-D-ribonucleotide + ATP + H(+) = deamido-NAD(+) + diphosphate. The protein operates within cofactor biosynthesis; NAD(+) biosynthesis; deamido-NAD(+) from nicotinate D-ribonucleotide: step 1/1. Catalyzes the reversible adenylation of nicotinate mononucleotide (NaMN) to nicotinic acid adenine dinucleotide (NaAD). The chain is Probable nicotinate-nucleotide adenylyltransferase from Yersinia pseudotuberculosis serotype O:1b (strain IP 31758).